Reading from the N-terminus, the 69-residue chain is uncharacterized protein (69 aa).

Residues 1 to 21 (MELLIPLSLLGLYLFSGTRDS) form the signal peptide. An N-linked (GlcNAc...) asparagine glycan is attached at N41.

The protein resides in the secreted. This is an uncharacterized protein from Dictyostelium discoideum (Social amoeba).